The sequence spans 271 residues: Glutamate racemase (271 aa).

Residues 12 to 13 and 44 to 45 contribute to the substrate site; these read DS and YG. The active-site Proton donor/acceptor is Cys-75. 76–77 provides a ligand contact to substrate; sequence NS. Catalysis depends on Cys-185, which acts as the Proton donor/acceptor. A substrate-binding site is contributed by 186-187; it reads TH.

The protein belongs to the aspartate/glutamate racemases family.

The catalysed reaction is L-glutamate = D-glutamate. It participates in cell wall biogenesis; peptidoglycan biosynthesis. In terms of biological role, provides the (R)-glutamate required for cell wall biosynthesis. The chain is Glutamate racemase from Mycobacterium bovis (strain BCG / Pasteur 1173P2).